The sequence spans 1021 residues: Transmembrane protein 132A (1021 aa).

Residues 1–32 form the signal peptide; sequence MTERAAAAPRGPYGAWLCLLVALALEVVRVGS. Topologically, residues 33–848 are extracellular; it reads NQNTLDPIYL…VTDLELGMYA (816 aa). Residues 207–226 are disordered; that stretch reads PAGEGPGGCGPGTEEEPKEQ. N-linked (GlcNAc...) asparagine glycosylation is present at asparagine 276. Residues 606–913 form a binds to HSPA5/GRP78 region; the sequence is IEVRSPLSDS…QLDRCSSSSP (308 aa). Positions 666–1021 are confers cellular localization similar to full-length form; the sequence is LPAPKQEVAL…NYMERIRGSS (356 aa). Positions 793–835 are disordered; it reads AGDMGSHVGPGIRGKFERAEEEAGKEENEAKEEEEDEEEMVPA. The span at 806 to 820 shows a compositional bias: basic and acidic residues; the sequence is GKFERAEEEAGKEEN. Positions 821–832 are enriched in acidic residues; it reads EAKEEEEDEEEM. Residues 849-869 traverse the membrane as a helical segment; that stretch reads LLGIFCLAFLIFLVNGVVFVL. Over 870–1021 the chain is Cytoplasmic; that stretch reads RYQRKEPPDS…NYMERIRGSS (152 aa). Positions 903-955 are disordered; sequence RQLDRCSSSSPPKGEGGCPCESGAGGDTSTVAPSASESPAGSTSTLARKEAGG. Residues 929–948 show a composition bias toward polar residues; sequence DTSTVAPSASESPAGSTSTL.

Belongs to the TMEM132 family. As to quaternary structure, interacts with HSPA5/GRP78. Expressed in the brain in neuronal cells of the hypothalamus, thalamus, cerebral cortex, amygdala, and cerebellum.

Its subcellular location is the golgi apparatus membrane. The protein localises to the endoplasmic reticulum membrane. In terms of biological role, may play a role in embryonic and postnatal development of the brain. Increased resistance to cell death induced by serum starvation in cultured cells. Regulates cAMP-induced GFAP gene expression via STAT3 phosphorylation. This Rattus norvegicus (Rat) protein is Transmembrane protein 132A (Tmem132a).